We begin with the raw amino-acid sequence, 295 residues long: Proline-rich proteoglycan 2 (295 aa).

The first 16 residues, 1-16, serve as a signal peptide directing secretion; the sequence is MLVVLLTAALLVLSSA. The interval 16-295 is disordered; the sequence is AQGVDEEVVY…QSSFLWSFSA (280 aa). A compositionally biased stretch (low complexity) spans 26 to 41; the sequence is EDSSQQLELEQQSQGH. Pro residues predominate over residues 48–58; it reads PPPGGLPPRPP. The span at 62–78 shows a compositional bias: acidic residues; sequence ENGDGDDNDDGDDDGSG. Pro residues-rich tracts occupy residues 100–187 and 194–278; these read PPPA…PPGG and QGPP…PQGP.

Contains glycosaminoglycans of chondroitin-sulfate and heparan types.

Its subcellular location is the secreted. The chain is Proline-rich proteoglycan 2 (Prpg2) from Rattus norvegicus (Rat).